The following is a 322-amino-acid chain: NADH-quinone oxidoreductase subunit H (322 aa).

8 consecutive transmembrane segments (helical) span residues 15-35 (IFQSIVILVCVLITASIMSVV), 81-101 (ITFLIAPILAFISLLLVITII), 114-134 (IGVLFFLMMASLSVYSVLLAG), 149-169 (ATAQTLSYEVFLGLSCMGVVA), 184-204 (IGLWNIIPQFFGFLAFFIAGL), 237-257 (FFIGEYISIIVVSSLISTMFF), 265-285 (FPSYFWFILKTLCFMMIFILI), and 299-319 (LFGWKVCFPLTLINLIFTALI).

Belongs to the complex I subunit 1 family. As to quaternary structure, NDH-1 is composed of 13 different subunits. Subunits NuoA, H, J, K, L, M, N constitute the membrane sector of the complex.

The protein resides in the cell membrane. It carries out the reaction a quinone + NADH + 5 H(+)(in) = a quinol + NAD(+) + 4 H(+)(out). Its function is as follows. NDH-1 shuttles electrons from NADH, via FMN and iron-sulfur (Fe-S) centers, to quinones in the respiratory chain. The immediate electron acceptor for the enzyme in this species is believed to be ubiquinone. Couples the redox reaction to proton translocation (for every two electrons transferred, four hydrogen ions are translocated across the cytoplasmic membrane), and thus conserves the redox energy in a proton gradient. This subunit may bind ubiquinone. In Buchnera aphidicola subsp. Baizongia pistaciae (strain Bp), this protein is NADH-quinone oxidoreductase subunit H.